A 300-amino-acid chain; its full sequence is F-box/LRR-repeat protein 15 (300 aa).

Met-1 is subject to N-acetylmethionine. One can recognise an F-box domain in the interval Phe-19–Asp-66. Positions Asn-113–Arg-269 are interaction with SMURF1. LRR repeat units lie at residues Arg-141–Ala-162, Ala-167–Ala-188, Gly-194–Ala-215, Glu-220–Ala-241, and Val-246–Arg-267.

It belongs to the FBXL15 family. In terms of assembly, part of the SCF (SKP1-CUL1-F-box) E3 ubiquitin-protein ligase complex SCF(FBXL15) composed of CUL1, SKP1, RBX1 and FBXL15.

It is found in the cytoplasm. It participates in protein modification; protein ubiquitination. Functionally, substrate recognition component of a SCF (SKP1-CUL1-F-box protein) E3 ubiquitin-protein ligase complex which mediates the ubiquitination and subsequent proteasomal degradation of SMURF1, thereby acting as a positive regulator of the BMP signaling pathway. Required for dorsal/ventral pattern formation and bone mass maintenance. Also mediates ubiquitination of SMURF2 and WWP2. The protein is F-box/LRR-repeat protein 15 (FBXL15) of Homo sapiens (Human).